A 740-amino-acid chain; its full sequence is Probable apyrase 7 (740 aa).

Residues 1–113 (MVFGRITELF…PSTRRKLIRA (113 aa)) lie on the Cytoplasmic side of the membrane. The helical transmembrane segment at 114-134 (VMIVMCLFLFAFLVYIVSMYI) threads the bilayer. The Extracellular portion of the chain corresponds to 135–581 (YTNWSRGASR…LKSYETLSMK (447 aa)). The N-linked (GlcNAc...) asparagine glycan is linked to asparagine 137. An ATP-binding site is contributed by 147-157 (VVFDCGSTGTR). An N-linked (GlcNAc...) asparagine glycan is attached at asparagine 208. Glutamate 284 serves as the catalytic Proton acceptor. 309-319 (GALDLGGSSLQ) serves as a coordination point for ATP. N-linked (GlcNAc...) asparagine glycosylation is found at asparagine 330, asparagine 374, asparagine 439, and asparagine 484. A helical transmembrane segment spans residues 582-602 (INPIALISILILSLLLLLCAL). Topologically, residues 603–740 (SRVSNCLPRF…SLADSHMLKM (138 aa)) are cytoplasmic. The interval 706 to 740 (FWSSPRRSQMRLQSRRSQSREDLSSSLADSHMLKM) is disordered. Positions 708–721 (SSPRRSQMRLQSRR) are enriched in low complexity.

Belongs to the GDA1/CD39 NTPase family. Ca(2+) is required as a cofactor. Detected in mature pollen grains. Also expressed in more diverse tissues such as roots, leaves, stems, pistils and sepals. More particularly expressed in the vascular bundle.

It is found in the membrane. The enzyme catalyses a ribonucleoside 5'-triphosphate + 2 H2O = a ribonucleoside 5'-phosphate + 2 phosphate + 2 H(+). Functionally, catalyzes the hydrolysis of phosphoanhydride bonds of nucleoside tri- and di-phosphates. Involved in the regulation of pollen and anther development. The polypeptide is Probable apyrase 7 (APY7) (Arabidopsis thaliana (Mouse-ear cress)).